Reading from the N-terminus, the 541-residue chain is Glutamyl-tRNA(Gln) amidotransferase subunit B, mitochondrial (541 aa).

Belongs to the GatB/GatE family. GatB subfamily. Subunit of the heterotrimeric GatFAB amidotransferase (AdT) complex, composed of A, B and F subunits.

The protein resides in the mitochondrion. It carries out the reaction L-glutamyl-tRNA(Gln) + L-glutamine + ATP + H2O = L-glutaminyl-tRNA(Gln) + L-glutamate + ADP + phosphate + H(+). Its function is as follows. Allows the formation of correctly charged Gln-tRNA(Gln) through the transamidation of misacylated Glu-tRNA(Gln) in the mitochondria. The reaction takes place in the presence of glutamine and ATP through an activated gamma-phospho-Glu-tRNA(Gln). This is Glutamyl-tRNA(Gln) amidotransferase subunit B, mitochondrial from Saccharomyces cerevisiae (strain RM11-1a) (Baker's yeast).